The sequence spans 1400 residues: DNA-directed RNA polymerase subunit beta' (1400 aa).

Residues cysteine 71, cysteine 73, cysteine 86, and cysteine 89 each coordinate Zn(2+). Residues aspartate 462, aspartate 464, and aspartate 466 each contribute to the Mg(2+) site. Positions 810, 884, 891, and 894 each coordinate Zn(2+). The segment at arginine 1377–glutamate 1400 is disordered.

It belongs to the RNA polymerase beta' chain family. In terms of assembly, the RNAP catalytic core consists of 2 alpha, 1 beta, 1 beta' and 1 omega subunit. When a sigma factor is associated with the core the holoenzyme is formed, which can initiate transcription. Requires Mg(2+) as cofactor. It depends on Zn(2+) as a cofactor.

It carries out the reaction RNA(n) + a ribonucleoside 5'-triphosphate = RNA(n+1) + diphosphate. Its function is as follows. DNA-dependent RNA polymerase catalyzes the transcription of DNA into RNA using the four ribonucleoside triphosphates as substrates. The polypeptide is DNA-directed RNA polymerase subunit beta' (Rhodopseudomonas palustris (strain HaA2)).